The primary structure comprises 84 residues: Cell division topological specificity factor (84 aa).

It belongs to the MinE family.

Its function is as follows. Prevents the cell division inhibition by proteins MinC and MinD at internal division sites while permitting inhibition at polar sites. This ensures cell division at the proper site by restricting the formation of a division septum at the midpoint of the long axis of the cell. The protein is Cell division topological specificity factor of Granulibacter bethesdensis (strain ATCC BAA-1260 / CGDNIH1).